Reading from the N-terminus, the 243-residue chain is Probable transcriptional regulatory protein BAPKO_0024/BafPKo_0025 (243 aa).

The protein belongs to the TACO1 family.

Its subcellular location is the cytoplasm. This Borreliella afzelii (strain PKo) (Borrelia afzelii) protein is Probable transcriptional regulatory protein BAPKO_0024/BafPKo_0025.